Here is a 291-residue protein sequence, read N- to C-terminus: 4-hydroxy-tetrahydrodipicolinate synthase (291 aa).

Pyruvate is bound at residue Thr45. The active-site Proton donor/acceptor is the Tyr131. The active-site Schiff-base intermediate with substrate is Lys159. Ile202 provides a ligand contact to pyruvate.

Belongs to the DapA family. In terms of assembly, homotetramer; dimer of dimers.

The protein localises to the cytoplasm. The enzyme catalyses L-aspartate 4-semialdehyde + pyruvate = (2S,4S)-4-hydroxy-2,3,4,5-tetrahydrodipicolinate + H2O + H(+). Its pathway is amino-acid biosynthesis; L-lysine biosynthesis via DAP pathway; (S)-tetrahydrodipicolinate from L-aspartate: step 3/4. In terms of biological role, catalyzes the condensation of (S)-aspartate-beta-semialdehyde [(S)-ASA] and pyruvate to 4-hydroxy-tetrahydrodipicolinate (HTPA). The chain is 4-hydroxy-tetrahydrodipicolinate synthase from Methanococcoides burtonii (strain DSM 6242 / NBRC 107633 / OCM 468 / ACE-M).